We begin with the raw amino-acid sequence, 518 residues long: Probable pectinesterase/pectinesterase inhibitor 16 (518 aa).

Residues 1–33 (MASSSSISNHKIPNTLMFLVIVNFLYLIQTNSA) form the signal peptide. Residues 30 to 172 (TNSAVSISSN…TGLLTSSLDL (143 aa)) are pectinesterase inhibitor 16. 2 N-linked (GlcNAc...) asparagine glycosylation sites follow: N82 and N161. Positions 213–502 (DAVVAPDGSG…FTVASFIDGN (290 aa)) are pectinesterase 16. Positions 289 and 319 each coordinate substrate. The active-site Proton donor; for pectinesterase activity is D342. Residue D363 is the Nucleophile; for pectinesterase activity of the active site. Substrate is bound by residues R422 and W424.

This sequence in the N-terminal section; belongs to the PMEI family. It in the C-terminal section; belongs to the pectinesterase family. Expressed in siliques and floral stems.

It localises to the secreted. Its subcellular location is the cell wall. The enzyme catalyses [(1-&gt;4)-alpha-D-galacturonosyl methyl ester](n) + n H2O = [(1-&gt;4)-alpha-D-galacturonosyl](n) + n methanol + n H(+). It participates in glycan metabolism; pectin degradation; 2-dehydro-3-deoxy-D-gluconate from pectin: step 1/5. In terms of biological role, acts in the modification of cell walls via demethylesterification of cell wall pectin. The chain is Probable pectinesterase/pectinesterase inhibitor 16 (PME16) from Arabidopsis thaliana (Mouse-ear cress).